Consider the following 292-residue polypeptide: MSIWAIGDLQGCYDATQRLLENIRFDPSQDTLWFCGDLVNRGGQSLETLRLVYSLRSHSVVVLGNHDLSLLAIAVRSEEEQRKVNPDLLRIITAEDRDEILTWLRMQKLIHVDRTIGWMMVHAGLAPKWTTQMAEKLAHEVEQQLHGADYRNLLHSMYGDKPEWSPALSGCNRSRAIINVLTRMRYCTPRGRISTEDKGTPGTQTQGMYPWFEVPGRVERDLKIVCGHWSTLGLTITQGIHAIDTGAVWGGKLTALQIDTDELRLAQVHGLSIEHPRHTHTPRRQAKKHSKK.

Residues 271 to 292 form a disordered region; the sequence is LSIEHPRHTHTPRRQAKKHSKK. Basic residues predominate over residues 277–292; the sequence is RHTHTPRRQAKKHSKK.

Belongs to the Ap4A hydrolase family.

It carries out the reaction P(1),P(4)-bis(5'-adenosyl) tetraphosphate + H2O = 2 ADP + 2 H(+). In terms of biological role, hydrolyzes diadenosine 5',5'''-P1,P4-tetraphosphate to yield ADP. The protein is Bis(5'-nucleosyl)-tetraphosphatase, symmetrical (apaH) of Xylella fastidiosa (strain 9a5c).